A 269-amino-acid chain; its full sequence is 4-hydroxy-tetrahydrodipicolinate reductase (269 aa).

NAD(+)-binding positions include 11-16 (GGSGRM) and Glu-37. An NADP(+)-binding site is contributed by Arg-38. NAD(+)-binding positions include 101 to 103 (GTT) and 125 to 128 (AGNM). Catalysis depends on His-158, which acts as the Proton donor/acceptor. His-159 contributes to the (S)-2,3,4,5-tetrahydrodipicolinate binding site. Lys-162 functions as the Proton donor in the catalytic mechanism. Residue 168-169 (GT) participates in (S)-2,3,4,5-tetrahydrodipicolinate binding.

It belongs to the DapB family.

It localises to the cytoplasm. The catalysed reaction is (S)-2,3,4,5-tetrahydrodipicolinate + NAD(+) + H2O = (2S,4S)-4-hydroxy-2,3,4,5-tetrahydrodipicolinate + NADH + H(+). The enzyme catalyses (S)-2,3,4,5-tetrahydrodipicolinate + NADP(+) + H2O = (2S,4S)-4-hydroxy-2,3,4,5-tetrahydrodipicolinate + NADPH + H(+). It functions in the pathway amino-acid biosynthesis; L-lysine biosynthesis via DAP pathway; (S)-tetrahydrodipicolinate from L-aspartate: step 4/4. Its function is as follows. Catalyzes the conversion of 4-hydroxy-tetrahydrodipicolinate (HTPA) to tetrahydrodipicolinate. The protein is 4-hydroxy-tetrahydrodipicolinate reductase of Dinoroseobacter shibae (strain DSM 16493 / NCIMB 14021 / DFL 12).